A 56-amino-acid chain; its full sequence is Pituitary adenylate cyclase-activating polypeptide (56 aa).

The important for receptor binding stretch occupies residues 42-50 (VKKYLAAVL). Leu-50 bears the Leucine amide mark.

It belongs to the glucagon family. In terms of assembly, interacts with ADCYAP1R1 (via N-terminal extracellular domain).

It localises to the secreted. Its function is as follows. PACAP is a neuropeptide involved in diverse array of physiological processes through activating the PACAP subfamily of class B1 G protein-coupled receptors: VIP receptor 1 (VIPR1), VIP receptor 2 (VIPR2), and PACAP type I receptor (ADCYAP1R1). Exerts neuroprotective and general cytoprotective effects due to anti-apoptotic, anti-inflammatory, and antioxidant actions. This is Pituitary adenylate cyclase-activating polypeptide (Adcyap1) from Heloderma suspectum (Gila monster).